A 161-amino-acid polypeptide reads, in one-letter code: RNA pyrophosphohydrolase (161 aa).

Residues 12-154 enclose the Nudix hydrolase domain; the sequence is PYRPGVGMMI…KRKLYQAVVK (143 aa). The Nudix box motif lies at 46–67; the sequence is GGIVPGETPSIAAMREMLEEIG.

The protein belongs to the Nudix hydrolase family. RppH subfamily. Requires a divalent metal cation as cofactor.

In terms of biological role, accelerates the degradation of transcripts by removing pyrophosphate from the 5'-end of triphosphorylated RNA, leading to a more labile monophosphorylated state that can stimulate subsequent ribonuclease cleavage. The chain is RNA pyrophosphohydrolase from Rickettsia conorii (strain ATCC VR-613 / Malish 7).